A 95-amino-acid polypeptide reads, in one-letter code: UPF0512 protein H (95 aa).

It belongs to the UPF0512 family.

The polypeptide is UPF0512 protein H (Dictyostelium discoideum (Social amoeba)).